We begin with the raw amino-acid sequence, 423 residues long: 5-hydroxytryptamine receptor 1A (423 aa).

Residues 1 to 20 (MEGLSPGQGNNTTSSEGPFG) form a disordered region. At 1 to 38 (MEGLSPGQGNNTTSSEGPFGTRGNATGISDVTFSYQVI) the chain is on the extracellular side. Positions 7–16 (GQGNNTTSSE) are enriched in polar residues. Residues Asn10, Asn11, and Asn24 are each glycosylated (N-linked (GlcNAc...) asparagine). The chain crosses the membrane as a helical span at residues 39–59 (TSLLLGTLIFCAVLGNACVVA). Residues 60–73 (AIALERSLQNVANY) lie on the Cytoplasmic side of the membrane. Residues 74-98 (LIGSLAVTDLMVSVLVLPMAALYQV) form a helical membrane-spanning segment. Residues 99–107 (LNKWTLGQV) are Extracellular-facing. The helical transmembrane segment at 108-132 (TCDLFIALDVLCCTSSILHLCAIAL) threads the bilayer. A disulfide bridge links Cys109 with Cys187. Positions 116 and 120 each coordinate serotonin. A DRY motif; important for ligand-induced conformation changes motif is present at residues 133-135 (DRY). Residues 133–152 (DRYWAITDPIDYVNKRTPRR) are Cytoplasmic-facing. The helical transmembrane segment at 153–174 (AAALISLTWLIGFLISIPPMLG) threads the bilayer. Topologically, residues 175 to 193 (WRTPEDRSDPDACTISKDH) are extracellular. A helical transmembrane segment spans residues 194-216 (GYTIYSTFGAFYIPLLLMLVLYG). At 217-346 (RIFRAARFRI…LARERKTVKT (130 aa)) the chain is on the cytoplasmic side. The segment at 235 to 277 (RKGADARSGVSPAPQPRKSVNGEPGGREWRQGPGSKAGGPLCT) is disordered. Residues Lys345, Thr346, and Gly352 each contribute to the 1D-myo-inositol 4-phosphate site. A helical membrane pass occupies residues 347-370 (LGIIMGTFILCWLPFFIVALVLPF). Topologically, residues 371 to 378 (CESSCHMP) are extracellular. The helical transmembrane segment at 379-403 (TLLGAIINWLGYSNSLLNPVIYAYF) threads the bilayer. The NPxxY motif; important for ligand-induced conformation changes and signaling motif lies at 396 to 400 (NPVIY). Positions 403, 404, and 405 each coordinate 1D-myo-inositol 4-phosphate. Residues 404–423 (NKDFQNAFKKIVRCKFCRRR) are Cytoplasmic-facing.

The protein belongs to the G-protein coupled receptor 1 family. 5-hydroxytryptamine receptor subfamily. HTR1A sub-subfamily. As to quaternary structure, heterodimer; heterodimerizes with GPER1. Interacts with YIF1B. Interacts with GPR39 and GALR1.

Its subcellular location is the cell membrane. The protein localises to the cell projection. It is found in the dendrite. With respect to regulation, G-protein coupled receptor activity is regulated by lipids: phosphatidylinositol 4-phosphate increases HTR1A-mediated activity. Its function is as follows. G-protein coupled receptor for 5-hydroxytryptamine (serotonin). Also functions as a receptor for various drugs and psychoactive substances. Ligand binding causes a conformation change that triggers signaling via guanine nucleotide-binding proteins (G proteins) and modulates the activity of downstream effectors, such as adenylate cyclase. HTR1A is coupled to G(i)/G(o) G alpha proteins and mediates inhibitory neurotransmission: signaling inhibits adenylate cyclase activity and activates a phosphatidylinositol-calcium second messenger system that regulates the release of Ca(2+) ions from intracellular stores. Beta-arrestin family members regulate signaling by mediating both receptor desensitization and resensitization processes. This Vulpes vulpes (Red fox) protein is 5-hydroxytryptamine receptor 1A (HTR1A).